We begin with the raw amino-acid sequence, 151 residues long: Odorant-binding protein (151 aa).

2 disulfide bridges follow: Cys38–Cys42 and Cys57–Cys149.

This sequence belongs to the calycin superfamily. Lipocalin family. Expressed in salivary glands, hair and urine.

Its subcellular location is the secreted. Its function is as follows. May act as a pheromone. This Phodopus sungorus (Striped hairy-footed hamster) protein is Odorant-binding protein.